The sequence spans 199 residues: Protein ZNRD2 (199 aa).

A2 carries the N-acetylalanine modification. Residues C53, C56, C70, and C73 each coordinate Zn(2+). The tract at residues 93–148 (LSQAREHQLASSTEPASSSRPPSQPPVPRPEHCEGAAAGLKAAQAPPLPAAPPNTD) is disordered. S94 carries the phosphoserine modification. Residues 127–137 (GAAAGLKAAQA) are compositionally biased toward low complexity. Positions 173–194 (SLETSIQLCGLIRACAEALGSL) match the Nuclear export signal motif.

As to quaternary structure, homodimer. It depends on Zn(2+) as a cofactor. As to expression, expressed in the early postnatal brain.

Its subcellular location is the cytoplasm. In terms of biological role, might play a role in mitosis. Could be a centromere-associated protein. Antigenic molecule. May induce anti-centromere antibodies. This chain is Protein ZNRD2 (Znrd2), found in Mus musculus (Mouse).